A 37-amino-acid chain; its full sequence is Mau operon transcriptional activator (37 aa).

It belongs to the LysR transcriptional regulatory family.

Transcriptional activator of the mau genes involved in methylamine metabolism. In Paracoccus versutus (Thiobacillus versutus), this protein is Mau operon transcriptional activator (mauR).